The chain runs to 186 residues: Peptidyl-tRNA hydrolase (186 aa).

Tyrosine 14 lines the tRNA pocket. Catalysis depends on histidine 19, which acts as the Proton acceptor. TRNA contacts are provided by tyrosine 64, asparagine 66, and asparagine 112.

Belongs to the PTH family. Monomer.

It localises to the cytoplasm. The catalysed reaction is an N-acyl-L-alpha-aminoacyl-tRNA + H2O = an N-acyl-L-amino acid + a tRNA + H(+). Hydrolyzes ribosome-free peptidyl-tRNAs (with 1 or more amino acids incorporated), which drop off the ribosome during protein synthesis, or as a result of ribosome stalling. In terms of biological role, catalyzes the release of premature peptidyl moieties from peptidyl-tRNA molecules trapped in stalled 50S ribosomal subunits, and thus maintains levels of free tRNAs and 50S ribosomes. The sequence is that of Peptidyl-tRNA hydrolase from Bacillus cytotoxicus (strain DSM 22905 / CIP 110041 / 391-98 / NVH 391-98).